The following is a 266-amino-acid chain: Protein crossbronx-like (266 aa).

The UBC core domain occupies 15-178 (KQGYKILAEY…IQELAISSRR (164 aa)). Residues 216–266 (EATCEDDSPPAELLGHIDSSRQLDEDEANQRGKLQAATTDLQHGARCSVAQ) are disordered.

Belongs to the ubiquitin-conjugating enzyme family. FTS subfamily.

The sequence is that of Protein crossbronx-like from Drosophila ananassae (Fruit fly).